Consider the following 446-residue polypeptide: Chromogranin-A (446 aa).

Positions 1 to 16 (SAAALALLLCAGQVIA) are cleaved as a signal peptide. A disulfide bridge connects residues cysteine 33 and cysteine 54. The disordered stretch occupies residues 85–426 (AKERSHQQKK…RPEDQELESL (342 aa)). Serine 97 carries the phosphoserine modification. Over residues 105–138 (VLEKQNDQAELKEGTEEASSKEAAEKRGDSKEVE) the composition is skewed to basic and acidic residues. The span at 160–171 (EAEDQTPGEEEA) shows a compositional bias: acidic residues. At serine 209 the chain carries Phosphoserine. Positions 226 to 243 (AGEKAVPEEEGPRSEAFD) are enriched in basic and acidic residues. Serine 286 is modified (phosphoserine). Residue glycine 304 is modified to Glycine amide. Serine 319 bears the Phosphoserine mark. Over residues 319–346 (SEEWENAKRWSKMDRLAKELTAEKRLQG) the composition is skewed to basic and acidic residues. The span at 347 to 357 (EEEEEEEEEDP) shows a compositional bias: acidic residues. Serine 360 carries the phosphoserine modification. A Methionine sulfoxide modification is found at methionine 361. 4 positions are modified to phosphoserine: serine 387, serine 391, serine 413, and serine 427. Basic and acidic residues predominate over residues 403-420 (YLEEKKEEEGSANRRPED). A glycan (O-linked (Xyl...) (chondroitin sulfate) serine) is linked at serine 413.

Belongs to the chromogranin/secretogranin protein family. Self-interacts; self-assembly is promoted in vitro by chondroitin sulfate attachment which occurs at mildly acidic pH conditions. Interacts with SCG3. Interacts with ITPR1 in the secretory granules. In terms of processing, O-glycosylated; contains chondroitin sulfate (CS). CS attachment is pH-dependent, being observed at mildly acidic conditions of pH 5 but not at neutral pH, and promotes self-assembly in vitro. Post-translationally, parathyroid CHGA is sulfated on tyrosine residues, whereas adrenal CHGA seems to be mainly sulfated on oligosaccharide residues.

It is found in the secreted. The protein resides in the cytoplasmic vesicle. It localises to the secretory vesicle. The protein localises to the neuronal dense core vesicle. Strongly inhibits glucose induced insulin release from the pancreas. In terms of biological role, inhibits low calcium-stimulated parathyroid cell secretion. Its function is as follows. Inhibits catecholamine release from chromaffin cells and noradrenergic neurons by acting as a non-competitive nicotinic cholinergic antagonist. Can induce mast cell migration, degranulation and production of cytokines and chemokines. Functionally, regulates granule biogenesis in endocrine cells by up-regulating the transcription of protease nexin 1 (SERPINE2) via a cAMP-PKA-SP1 pathway. This leads to inhibition of granule protein degradation in the Golgi complex which in turn promotes granule formation. The polypeptide is Chromogranin-A (CHGA) (Sus scrofa (Pig)).